We begin with the raw amino-acid sequence, 63 residues long: Short neurotoxin 2 (63 aa).

4 disulfide bridges follow: Cys-3–Cys-21, Cys-15–Cys-39, Cys-43–Cys-49, and Cys-50–Cys-55.

This sequence belongs to the three-finger toxin family. Short-chain subfamily. Orphan group XVIII sub-subfamily. In terms of tissue distribution, expressed by the venom gland.

Its subcellular location is the secreted. In terms of biological role, blocks both the muscle-twitch response to nerve stimulation and the response to exogenous acetylcholine. This chain is Short neurotoxin 2, found in Bungarus fasciatus (Banded krait).